Here is a 498-residue protein sequence, read N- to C-terminus: MTDLIKLDAATLAAKIAAREVSATEVTQACLDQIAATDAEYHAFLHVAGDQALAAAATVDKAIHEATAAGERLPSPLAGVPLALKDVFTTTDMPTTCGSKILEGWTSPYDATVTAKLRAAGIPILGKTNMDEFAMGSSTENSAYGPTRNPWNVDCVPGGSGGGSAAALAAFQAPLAIGSDTGGSIRQPAALTATVGVKPTYGTVSRYGLIACASSLDQGGPCARTVLDTALLHQVIAGHDPRDSTSVNAAVPDVVGAARAGARGDLKGVRIGVVKQLRSGEGYQPGVLASFTAAVEQLTALGAEVSEVDCPHFDHSLAAYYLILPSEVSSNLAKFDGMRYGLRVGDDGTTSAEEVMAMTRAAGFGAEVKRRIMIGTYALSAGYYDAYYNQAQKVRTLIARDLDEAYRSVDVLVSPATPSTAFRLGEKVDDPLAMYLFDLCTLPLNLAGHCGMSVPSGLSADDNLPVGLQIMAPALADDRLYRVGAAYEAARGPLPTAL.

Catalysis depends on charge relay system residues Lys-85 and Ser-160. The active-site Acyl-ester intermediate is Ser-184.

It belongs to the amidase family. GatA subfamily. As to quaternary structure, heterotrimer of A, B and C subunits.

It catalyses the reaction L-glutamyl-tRNA(Gln) + L-glutamine + ATP + H2O = L-glutaminyl-tRNA(Gln) + L-glutamate + ADP + phosphate + H(+). Its function is as follows. Allows the formation of correctly charged Gln-tRNA(Gln) through the transamidation of misacylated Glu-tRNA(Gln) in organisms which lack glutaminyl-tRNA synthetase. The reaction takes place in the presence of glutamine and ATP through an activated gamma-phospho-Glu-tRNA(Gln). The chain is Glutamyl-tRNA(Gln) amidotransferase subunit A from Mycolicibacterium vanbaalenii (strain DSM 7251 / JCM 13017 / BCRC 16820 / KCTC 9966 / NRRL B-24157 / PYR-1) (Mycobacterium vanbaalenii).